The chain runs to 40 residues: Photosystem II reaction center protein J (40 aa).

The chain crosses the membrane as a helical span at residues 8 to 28 (IPLWIIGTVTGLLVIGLIGIF).

Belongs to the PsbJ family. PSII is composed of 1 copy each of membrane proteins PsbA, PsbB, PsbC, PsbD, PsbE, PsbF, PsbH, PsbI, PsbJ, PsbK, PsbL, PsbM, PsbT, PsbX, PsbY, PsbZ, Psb30/Ycf12, at least 3 peripheral proteins of the oxygen-evolving complex and a large number of cofactors. It forms dimeric complexes.

The protein resides in the plastid. Its subcellular location is the chloroplast thylakoid membrane. Functionally, one of the components of the core complex of photosystem II (PSII). PSII is a light-driven water:plastoquinone oxidoreductase that uses light energy to abstract electrons from H(2)O, generating O(2) and a proton gradient subsequently used for ATP formation. It consists of a core antenna complex that captures photons, and an electron transfer chain that converts photonic excitation into a charge separation. In Ipomoea purpurea (Common morning glory), this protein is Photosystem II reaction center protein J.